Reading from the N-terminus, the 326-residue chain is Zinc finger CCCH domain-containing protein 15 (326 aa).

The span at 1 to 14 shows a compositional bias: gly residues; the sequence is MADGGGGGEAGSGG. Residues 1–142 are disordered; sequence MADGGGGGEA…SSSGSGSGEV (142 aa). The span at 24 to 33 shows a compositional bias: basic residues; that stretch reads KPPKNIRKRP. Low complexity predominate over residues 47 to 64; it reads SGAIAAARAKKAPSSTSK. Positions 81 to 100 are enriched in polar residues; that stretch reads YESSRTIQASTDSRATATLE. The span at 104 to 125 shows a compositional bias: basic and acidic residues; sequence EFDRDARAIRERQLKQAEESLK. A C3H1-type zinc finger spans residues 187-215; sequence DYQPDICKDYKETGYCGYGDSCKFMHDRG. The RING-type zinc-finger motif lies at 265 to 303; sequence CYICREPFVDPVVTKCKHYFCEHCALKHHSKNKKCFVCN.

The protein is Zinc finger CCCH domain-containing protein 15 of Oryza sativa subsp. japonica (Rice).